The sequence spans 329 residues: Phospho-N-acetylmuramoyl-pentapeptide-transferase (329 aa).

Helical transmembrane passes span 1–21 (MLLNGIVAAVITMIITIIGIP), 53–73 (MGGFVFVVVSLVVSLVAALVF), 76–96 (FSPAFITAWWVFAMYAVIGFL), 109–129 (GLTAKQKMLAQILIGIVSYFI), 141–161 (ILSWQVNIGIFFSIFIIIWLV), 175–195 (GLASITVAISLTAYAVIAVVH), 198–218 (YDVLLIILSVIGGLLGFFVFN), 237–257 (FLAIVSILLHAEWTLLLIGAV), and 309–329 (IVFWLFTAVLSVIALCIYFAF).

This sequence belongs to the glycosyltransferase 4 family. MraY subfamily. Requires Mg(2+) as cofactor.

The protein resides in the cell membrane. The enzyme catalyses UDP-N-acetyl-alpha-D-muramoyl-L-alanyl-gamma-D-glutamyl-L-lysyl-D-alanyl-D-alanine + di-trans,octa-cis-undecaprenyl phosphate = Mur2Ac(oyl-L-Ala-gamma-D-Glu-L-Lys-D-Ala-D-Ala)-di-trans,octa-cis-undecaprenyl diphosphate + UMP. The protein operates within cell wall biogenesis; peptidoglycan biosynthesis. In terms of biological role, catalyzes the initial step of the lipid cycle reactions in the biosynthesis of the cell wall peptidoglycan: transfers peptidoglycan precursor phospho-MurNAc-pentapeptide from UDP-MurNAc-pentapeptide onto the lipid carrier undecaprenyl phosphate, yielding undecaprenyl-pyrophosphoryl-MurNAc-pentapeptide, known as lipid I. In Lactococcus lactis subsp. cremoris (strain SK11), this protein is Phospho-N-acetylmuramoyl-pentapeptide-transferase.